We begin with the raw amino-acid sequence, 663 residues long: DNA topoisomerase 4 subunit B (663 aa).

Residues Y21, N61, D88, 130–136, and K360 each bind ATP; that span reads GLHGVGI. The 115-residue stretch at 440-554 folds into the Toprim domain; the sequence is TELFIVEGDS…EGHLYLAKPP (115 aa). 3 residues coordinate Mg(2+): E446, D519, and D521.

Belongs to the type II topoisomerase family. ParE type 1 subfamily. In terms of assembly, heterotetramer composed of ParC and ParE. Mg(2+) serves as cofactor. Mn(2+) is required as a cofactor. It depends on Ca(2+) as a cofactor.

It catalyses the reaction ATP-dependent breakage, passage and rejoining of double-stranded DNA.. Functionally, topoisomerase IV is essential for chromosome segregation. It relaxes supercoiled DNA. Performs the decatenation events required during the replication of a circular DNA molecule. In Rickettsia typhi (strain ATCC VR-144 / Wilmington), this protein is DNA topoisomerase 4 subunit B.